A 292-amino-acid polypeptide reads, in one-letter code: Mitochondrial ornithine transporter 1 (292 aa).

Solcar repeat units follow at residues 11–97, 105–196, and 211–292; these read EGAI…CSKF, SPLG…VKKS, and SKIW…LSAL. A run of 6 helical transmembrane segments spans residues 14-34, 69-89, 104-124, 171-187, 213-233, and 267-287; these read ILDI…EFPF, FFQG…TLFV, VSPL…ASLV, GQSG…VAWF, IWEL…SIFP, and GLGI…YIFE.

This sequence belongs to the mitochondrial carrier (TC 2.A.29) family.

It is found in the mitochondrion inner membrane. In terms of biological role, required for arginine biosynthesis. Transports ornithine synthesized from glutamate in the mitochondrial matrix to the cytosol, where it is converted to arginine. This Saccharomyces cerevisiae (strain ATCC 204508 / S288c) (Baker's yeast) protein is Mitochondrial ornithine transporter 1 (ORT1).